The sequence spans 125 residues: Phosphoribosyl-AMP cyclohydrolase (125 aa).

Asp-74 contacts Mg(2+). Cys-75 serves as a coordination point for Zn(2+). Mg(2+) is bound by residues Asp-76 and Asp-78. 2 residues coordinate Zn(2+): Cys-92 and Cys-99.

The protein belongs to the PRA-CH family. Homodimer. Requires Mg(2+) as cofactor. The cofactor is Zn(2+).

Its subcellular location is the cytoplasm. It catalyses the reaction 1-(5-phospho-beta-D-ribosyl)-5'-AMP + H2O = 1-(5-phospho-beta-D-ribosyl)-5-[(5-phospho-beta-D-ribosylamino)methylideneamino]imidazole-4-carboxamide. It participates in amino-acid biosynthesis; L-histidine biosynthesis; L-histidine from 5-phospho-alpha-D-ribose 1-diphosphate: step 3/9. Catalyzes the hydrolysis of the adenine ring of phosphoribosyl-AMP. The sequence is that of Phosphoribosyl-AMP cyclohydrolase from Geobacter sp. (strain M21).